The primary structure comprises 257 residues: Putative pentatricopeptide repeat-containing protein At1g43010 (257 aa).

PPR repeat units lie at residues 133–168 and 169–203; these read KMRDYSVLLSSYTKPVRTVDKAEATFKKMRELGFLL and KPYLFNSMICLYGQLQRLDMVEKLLYKLKKNNMEV.

This sequence belongs to the PPR family. P subfamily.

The polypeptide is Putative pentatricopeptide repeat-containing protein At1g43010 (Arabidopsis thaliana (Mouse-ear cress)).